We begin with the raw amino-acid sequence, 585 residues long: Proline--tRNA ligase (585 aa).

Belongs to the class-II aminoacyl-tRNA synthetase family. ProS type 1 subfamily. In terms of assembly, homodimer.

Its subcellular location is the cytoplasm. It catalyses the reaction tRNA(Pro) + L-proline + ATP = L-prolyl-tRNA(Pro) + AMP + diphosphate. Its function is as follows. Catalyzes the attachment of proline to tRNA(Pro) in a two-step reaction: proline is first activated by ATP to form Pro-AMP and then transferred to the acceptor end of tRNA(Pro). As ProRS can inadvertently accommodate and process non-cognate amino acids such as alanine and cysteine, to avoid such errors it has two additional distinct editing activities against alanine. One activity is designated as 'pretransfer' editing and involves the tRNA(Pro)-independent hydrolysis of activated Ala-AMP. The other activity is designated 'posttransfer' editing and involves deacylation of mischarged Ala-tRNA(Pro). The misacylated Cys-tRNA(Pro) is not edited by ProRS. This Cutibacterium acnes (strain DSM 16379 / KPA171202) (Propionibacterium acnes) protein is Proline--tRNA ligase.